Consider the following 260-residue polypeptide: Phosphatidate cytidylyltransferase (260 aa).

7 helical membrane passes run 9–29 (IIAL…LMLF), 46–66 (MIKF…IIML), 70–90 (AGSW…FILL), 102–122 (FMDA…FMYL), 130–150 (LHYI…AYIF), 172–192 (FVGG…FVDF), and 196–216 (LWLL…GDLV).

The protein belongs to the CDS family.

The protein resides in the cell membrane. It carries out the reaction a 1,2-diacyl-sn-glycero-3-phosphate + CTP + H(+) = a CDP-1,2-diacyl-sn-glycerol + diphosphate. The protein operates within phospholipid metabolism; CDP-diacylglycerol biosynthesis; CDP-diacylglycerol from sn-glycerol 3-phosphate: step 3/3. The sequence is that of Phosphatidate cytidylyltransferase (cdsA) from Staphylococcus saprophyticus subsp. saprophyticus (strain ATCC 15305 / DSM 20229 / NCIMB 8711 / NCTC 7292 / S-41).